The following is a 1407-amino-acid chain: JmjC domain-containing histone demethylation protein 1 (1407 aa).

Disordered regions lie at residues 1-86 and 98-151; these read MISA…SSTI and PTFT…NAFS. Basic and acidic residues-rich tracts occupy residues 55–67 and 125–140; these read DHVRSTPTDKRPS and PVERPAKRPRSERDES. The span at 141–150 shows a compositional bias: polar residues; the sequence is SYTQHRSNAF. Residues 323–382 form a PHD-type zinc finger; sequence QASCATCNLVRIPVDNEDQDVTWISCDGCKRWFHIVCAGFKNDRETRTVDKFICKTCRPI. The region spanning 577 to 735 is the JmjC domain; that stretch reads VSQSKLGRLI…MQIKIAKIEK (159 aa). T628 is a binding site for substrate. Residues H631 and D633 each coordinate Fe cation. K648 is a substrate binding site. H703 serves as a coordination point for Fe cation. Disordered stretches follow at residues 893–987, 1004–1027, 1122–1183, and 1252–1389; these read KLSL…LGPK, KEENNGASGSQMTVSTSSLGHHTP, IKAQ…QDSV, and DEMD…SLRL. 2 stretches are compositionally biased toward basic and acidic residues: residues 896-914 and 928-938; these read LAEKRPAGRPSRRSERNAD and LSERPAVDIQK. Over residues 1008–1027 the composition is skewed to polar residues; the sequence is NGASGSQMTVSTSSLGHHTP. Residues 1254–1264 are compositionally biased toward basic and acidic residues; the sequence is MDIHDQVDAGG. Low complexity predominate over residues 1273–1284; sequence PSSGSRQSSRQP. Residues 1285–1296 show a composition bias toward basic and acidic residues; the sequence is RQVERYMPEVHF. Residues 1297-1349 show a composition bias toward low complexity; that stretch reads AKTAKSTTTTPQTTRRSSFGSSGRKTTPGLSSGSKKSGSRPSSSHGKKSLSPS.

This sequence belongs to the JHDM1 histone demethylase family. Fe(2+) serves as cofactor.

The protein resides in the nucleus. It carries out the reaction N(6),N(6)-dimethyl-L-lysyl(36)-[histone H3] + 2 2-oxoglutarate + 2 O2 = L-lysyl(36)-[histone H3] + 2 formaldehyde + 2 succinate + 2 CO2. Its function is as follows. Histone demethylase that specifically demethylates 'Lys-36' of histone H3, thereby playing a central role in histone code. The sequence is that of JmjC domain-containing histone demethylation protein 1 (jhd1) from Emericella nidulans (strain FGSC A4 / ATCC 38163 / CBS 112.46 / NRRL 194 / M139) (Aspergillus nidulans).